A 77-amino-acid chain; its full sequence is Cysteine-rich protein 1 (77 aa).

An LIM zinc-binding domain is found at 2–63; sequence PKCPKCDKEV…HPCYSAMFGP (62 aa). 2 positions are modified to N6-acetyllysine: lysine 9 and lysine 22. Omega-N-methylarginine is present on arginine 68.

In terms of biological role, seems to have a role in zinc absorption and may function as an intracellular zinc transport protein. This Mus musculus (Mouse) protein is Cysteine-rich protein 1 (Crip1).